The sequence spans 528 residues: Phosphoenolpyruvate carboxykinase (ATP) (528 aa).

Substrate is bound by residues arginine 54, tyrosine 190, and lysine 196. ATP is bound by residues lysine 196, histidine 215, and 231–239; that span reads GLSGTGKTT. Mn(2+)-binding residues include lysine 196 and histidine 215. Residue aspartate 252 participates in Mn(2+) binding. ATP is bound by residues glutamate 280, arginine 316, and threonine 441. Arginine 316 provides a ligand contact to substrate.

It belongs to the phosphoenolpyruvate carboxykinase (ATP) family. Requires Mn(2+) as cofactor.

The protein localises to the cytoplasm. It catalyses the reaction oxaloacetate + ATP = phosphoenolpyruvate + ADP + CO2. Its pathway is carbohydrate biosynthesis; gluconeogenesis. Involved in the gluconeogenesis. Catalyzes the conversion of oxaloacetate (OAA) to phosphoenolpyruvate (PEP) through direct phosphoryl transfer between the nucleoside triphosphate and OAA. This is Phosphoenolpyruvate carboxykinase (ATP) from Sulfurimonas denitrificans (strain ATCC 33889 / DSM 1251) (Thiomicrospira denitrificans (strain ATCC 33889 / DSM 1251)).